The chain runs to 272 residues: MTLKKLNLHLVSDSSGETVISVAKSALKHFRSVETIEYVWSFVKGEEQIDKILEEIERKSDEHNFVICTITDDGLRKYLKDNCIKLKIPYRAILSHIIREISSYLEIEKDEKLDLYTEINNEYFQRIEAINYTINHDDGQNIQDIDKADIILVGVSRTSKSPTSMYLAYRGYKVANVPFVSEIPFYVDLAKLRNKLTIGVTIDVRRLIEIRKNRLTSINNEGNNIYADPRKVEEEIKEAEEFFKQNNWPIIDVTQRSIEEVSATIIQYFNKI.

154–161 (GVSRTSKS) contributes to the ADP binding site.

The protein belongs to the pyruvate, phosphate/water dikinase regulatory protein family. PDRP subfamily.

The catalysed reaction is N(tele)-phospho-L-histidyl/L-threonyl-[pyruvate, phosphate dikinase] + ADP = N(tele)-phospho-L-histidyl/O-phospho-L-threonyl-[pyruvate, phosphate dikinase] + AMP + H(+). The enzyme catalyses N(tele)-phospho-L-histidyl/O-phospho-L-threonyl-[pyruvate, phosphate dikinase] + phosphate + H(+) = N(tele)-phospho-L-histidyl/L-threonyl-[pyruvate, phosphate dikinase] + diphosphate. In terms of biological role, bifunctional serine/threonine kinase and phosphorylase involved in the regulation of the pyruvate, phosphate dikinase (PPDK) by catalyzing its phosphorylation/dephosphorylation. The protein is Putative pyruvate, phosphate dikinase regulatory protein of Wolbachia pipientis subsp. Culex pipiens (strain wPip).